Consider the following 158-residue polypeptide: MNDLPFWKSKTLAEMTAPEWESLCDGCGLCCLNKLEEWDSGDIYFTSVSCKLLDGESCRCSSYENRWDFVPDCVQLTKENVPDIAWLPPTCGYRLINEGRDLYWWHPLVSGDPETVHAAGISARGRTISETEIDIEDLEDYVVDWPLTVGEEKDEEEA.

Belongs to the UPF0260 family.

The sequence is that of UPF0260 protein RHECIAT_CH0001358 from Rhizobium etli (strain CIAT 652).